A 376-amino-acid polypeptide reads, in one-letter code: Probable dual-specificity RNA methyltransferase RlmN (376 aa).

Glu96 serves as the catalytic Proton acceptor. The Radical SAM core domain occupies 102–346; it reads YPDRSTVCVS…CTVRVERGVE (245 aa). Cys109 and Cys351 form a disulfide bridge. 3 residues coordinate [4Fe-4S] cluster: Cys116, Cys120, and Cys123. S-adenosyl-L-methionine contacts are provided by residues 171–172, Ser203, 226–228, and Asn308; these read GE and SLH. The S-methylcysteine intermediate role is filled by Cys351.

The protein belongs to the radical SAM superfamily. RlmN family. [4Fe-4S] cluster serves as cofactor.

Its subcellular location is the cytoplasm. It carries out the reaction adenosine(2503) in 23S rRNA + 2 reduced [2Fe-2S]-[ferredoxin] + 2 S-adenosyl-L-methionine = 2-methyladenosine(2503) in 23S rRNA + 5'-deoxyadenosine + L-methionine + 2 oxidized [2Fe-2S]-[ferredoxin] + S-adenosyl-L-homocysteine. It catalyses the reaction adenosine(37) in tRNA + 2 reduced [2Fe-2S]-[ferredoxin] + 2 S-adenosyl-L-methionine = 2-methyladenosine(37) in tRNA + 5'-deoxyadenosine + L-methionine + 2 oxidized [2Fe-2S]-[ferredoxin] + S-adenosyl-L-homocysteine. Functionally, specifically methylates position 2 of adenine 2503 in 23S rRNA and position 2 of adenine 37 in tRNAs. The chain is Probable dual-specificity RNA methyltransferase RlmN from Chloroflexus aurantiacus (strain ATCC 29366 / DSM 635 / J-10-fl).